A 307-amino-acid polypeptide reads, in one-letter code: tRNA pseudouridine synthase B (307 aa).

The Nucleophile role is filled by aspartate 45.

This sequence belongs to the pseudouridine synthase TruB family. Type 1 subfamily.

It catalyses the reaction uridine(55) in tRNA = pseudouridine(55) in tRNA. Functionally, responsible for synthesis of pseudouridine from uracil-55 in the psi GC loop of transfer RNAs. In Heliobacterium mobile (Heliobacillus mobilis), this protein is tRNA pseudouridine synthase B.